The chain runs to 625 residues: Glutamine--fructose-6-phosphate aminotransferase [isomerizing] (625 aa).

Cysteine 2 (nucleophile; for GATase activity) is an active-site residue. The region spanning 2–229 (CGLVGYVGQR…QDQAVVITAD (228 aa)) is the Glutamine amidotransferase type-2 domain. SIS domains follow at residues 298–437 (SDQE…ARGT) and 470–615 (LAYR…VDKP). Lysine 620 serves as the catalytic For Fru-6P isomerization activity.

Homodimer.

Its subcellular location is the cytoplasm. The catalysed reaction is D-fructose 6-phosphate + L-glutamine = D-glucosamine 6-phosphate + L-glutamate. Its function is as follows. Catalyzes the first step in hexosamine metabolism, converting fructose-6P into glucosamine-6P using glutamine as a nitrogen source. The protein is Glutamine--fructose-6-phosphate aminotransferase [isomerizing] of Mycobacterium leprae (strain TN).